A 202-amino-acid polypeptide reads, in one-letter code: NADH-quinone oxidoreductase subunit C (202 aa).

Belongs to the complex I 30 kDa subunit family. NDH-1 is composed of 14 different subunits. Subunits NuoB, C, D, E, F, and G constitute the peripheral sector of the complex.

The protein resides in the cell inner membrane. The enzyme catalyses a quinone + NADH + 5 H(+)(in) = a quinol + NAD(+) + 4 H(+)(out). Its function is as follows. NDH-1 shuttles electrons from NADH, via FMN and iron-sulfur (Fe-S) centers, to quinones in the respiratory chain. The immediate electron acceptor for the enzyme in this species is believed to be ubiquinone. Couples the redox reaction to proton translocation (for every two electrons transferred, four hydrogen ions are translocated across the cytoplasmic membrane), and thus conserves the redox energy in a proton gradient. This is NADH-quinone oxidoreductase subunit C from Albidiferax ferrireducens (strain ATCC BAA-621 / DSM 15236 / T118) (Rhodoferax ferrireducens).